A 110-amino-acid chain; its full sequence is Putative membrane protein insertion efficiency factor (110 aa).

Belongs to the UPF0161 family.

It is found in the cell inner membrane. Could be involved in insertion of integral membrane proteins into the membrane. The polypeptide is Putative membrane protein insertion efficiency factor (Campylobacter hominis (strain ATCC BAA-381 / DSM 21671 / CCUG 45161 / LMG 19568 / NCTC 13146 / CH001A)).